Reading from the N-terminus, the 242-residue chain is uncharacterized protein (242 aa).

The region spanning 2-62 (EKAYKILSVQ…VEKPSVIFED (61 aa)) is the S4 RNA-binding domain. The active site involves aspartate 93.

This sequence belongs to the pseudouridine synthase RluA family.

The enzyme catalyses a uridine in RNA = a pseudouridine in RNA. This is an uncharacterized protein from Helicobacter pylori (strain ATCC 700392 / 26695) (Campylobacter pylori).